The primary structure comprises 700 residues: Pyrroloquinoline quinone transporter (700 aa).

The N-terminal stretch at 1 to 23 is a signal peptide; the sequence is MKIFSVRQTVLPALLVLSPVVFA. Positions 39–157 constitute a TBDR plug domain; sequence SELDTPAAVS…SGGVMNVTTQ (119 aa). 24 consecutive transmembrane segments (beta stranded) span residues 132–136, 150–160, 162–171, 177–186, 195–204, 220–227, 233–241, 280–288, 295–301, 335–344, 350–358, 398–405, 411–419, 447–456, 464–468, 500–509, 511–520, 549–556, 563–570, 597–604, 611–617, 637–647, 651–659, and 689–697; these read NVEVL, GVMNVTTQTGQ, PPTIEASSYY, WRYGLKATGA, DVDYTVSTTR, LANAKLGV, SKLSLIFNS, QAGLRYERS, MSVMMYA, GIDSRWTHRG, VTFTTGLNY, DPYLQTQW, LSLDAGVRY, WLPAGSLKYA, YLAAG, TIEIGSKTRI, DGLLSLALFQ, GAELAWDQ, RVNASWTW, MGFASIGY, YAGTEAR, LVGLFTGYKYN, LTVDLFGRV, and YGVGMNIAW. Positions 162 to 697 constitute a TBDR beta-barrel domain; sequence PPTIEASSYY…NYGVGMNIAW (536 aa). The TonB C-terminal box motif lies at 680 to 700; the sequence is YYEPSPGRNYGVGMNIAWRFE.

Belongs to the TonB-dependent receptor family.

Its subcellular location is the cell outer membrane. Mediates the TonB-dependent high affinity transport across the outer membrane of pyrroloquinoline quinone (PQQ), a redox cofactor required for the activity of Gcd and Asd dehydrogenases. The uptake process is energised via the TonB-ExbBD complex. Not involved in the transport of an iron-containing substrate under laboratory conditions. This is Pyrroloquinoline quinone transporter from Escherichia coli (strain K12).